The chain runs to 560 residues: Interferon alpha/beta receptor 1 (560 aa).

The signal sequence occupies residues 1–24 (MLGLLGATTLMLVAGAPWVLPAGG). Residues 25-437 (ADLRSPENVV…EKTKPGSTSQ (413 aa)) lie on the Extracellular side of the membrane. 4 Fibronectin type-III domains span residues 29-125 (SPEN…FQEA), 133-224 (HLEA…INTT), 231-329 (SPEN…TEMQ), and 333-433 (FPPV…TKPG). A glycan (N-linked (GlcNAc...) asparagine) is linked at Asn55. A disulfide bridge connects residues Cys76 and Cys84. N-linked (GlcNAc...) asparagine glycosylation is found at Asn85, Asn108, and Asn172. The cysteines at positions 199 and 220 are disulfide-linked. N-linked (GlcNAc...) asparagine glycosylation is found at Asn222, Asn249, and Asn254. Residues Cys283 and Cys291 are joined by a disulfide bond. Asn313, Asn377, and Asn417 each carry an N-linked (GlcNAc...) asparagine glycan. Cysteines 404 and 427 form a disulfide. The chain crosses the membrane as a helical span at residues 438-458 (AWLIAGILSAILLFPAVFYGV). Residues 459–560 (KVVSRCINYV…GEEILRQAAV (102 aa)) are Cytoplasmic-facing. A lipid anchor (S-palmitoyl cysteine) is attached at Cys464. A phosphotyrosine; by TYK2 mark is found at Tyr467 and Tyr482. The segment at 492–501 (LLSTSEEQTE) is important for interaction with TYK2. Phosphoserine is present on residues Ser496 and Ser536. The segment at 520 to 560 (QIDDNHSRCSSQTNRDSGVYSNEDENSGSKIGEEILRQAAV) is disordered. The span at 527 to 539 (RCSSQTNRDSGVY) shows a compositional bias: polar residues. The span at 550-560 (IGEEILRQAAV) shows a compositional bias: basic and acidic residues.

Belongs to the type II cytokine receptor family. Heterodimer with IFNAR2; forming the receptor for type I interferon. Interacts with TYK2. Interacts with STAT1 and STAT2; the interaction requires its phosphorylation at Tyr-482. Interacts (serine-phosphorylated form) with FBXW11, the substrate recognition component of a SCF (SKP1-CUL1-F-box protein) E3 ubiquitin-protein ligase complex. Interacts with SHMT2; this promotes interaction with ABRAXAS2 and the BRISC complex. Interacts with TRIM10; this interaction prevents association between IFNAR1 and TYK2. Ubiquitinated, leading to its internalization and degradation. Polyubiquitinated via 'Lys-48'-linked and 'Lys-63'-linked ubiquitin chains, leading to receptor internalization and lysosomal degradation. The 'Lys-63'-linked ubiquitin chains are cleaved off by the BRISC complex. Post-translationally, phosphorylated on tyrosine residues in response to interferon-binding: phosphorylation by TYK2 tyrosine kinase creates docking sites for STAT proteins. Phosphorylated on serine residues in response to interferon binding; this promotes interaction with FBXW11 and ubiquitination. In terms of processing, palmitoylation at Cys-464 is required for the activation of STAT1 and STAT2.

The protein localises to the cell membrane. The protein resides in the late endosome. It is found in the lysosome. In terms of biological role, together with IFNAR2, forms the heterodimeric receptor for type I interferons (including interferons alpha, beta, epsilon, omega and kappa). Type I interferon binding activates the JAK-STAT signaling cascade, resulting in transcriptional activation or repression of interferon-regulated genes that encode the effectors of the interferon response. Mechanistically, type I interferon-binding brings the IFNAR1 and IFNAR2 subunits into close proximity with one another, driving their associated Janus kinases (JAKs) (TYK2 bound to IFNAR1 and JAK1 bound to IFNAR2) to cross-phosphorylate one another. The activated kinases phosphorylate specific tyrosine residues on the intracellular domains of IFNAR1 and IFNAR2, forming docking sites for the STAT transcription factors. STAT proteins are then phosphorylated by the JAKs, promoting their translocation into the nucleus to regulate expression of interferon-regulated genes. Can also act independently of IFNAR2: form an active IFNB1 receptor by itself and activate a signaling cascade that does not involve activation of the JAK-STAT pathway. In Sus scrofa (Pig), this protein is Interferon alpha/beta receptor 1 (IFNAR1).